Consider the following 330-residue polypeptide: Ferrochelatase (330 aa).

Fe cation-binding residues include His-200 and Glu-281.

Belongs to the ferrochelatase family.

Its subcellular location is the cytoplasm. It carries out the reaction heme b + 2 H(+) = protoporphyrin IX + Fe(2+). The protein operates within porphyrin-containing compound metabolism; protoheme biosynthesis; protoheme from protoporphyrin-IX: step 1/1. Its function is as follows. Catalyzes the ferrous insertion into protoporphyrin IX. This Marinomonas sp. (strain MWYL1) protein is Ferrochelatase.